The sequence spans 432 residues: MSELKDCPLQFHDFKSVDHMKVCPRYTAVLARSEDDGIGIEELDTLQLELETLLSSASRRLRVLEAETQILTDWQDKKGDRRILKLARDHELGAPPKHGKPKKQKLEGKTGHGPGPGPGRPKSKNVQPKIQEYEFTDDPIDVPRIPKNDAPNRFWASVEPYCADITSEEVRTLEELLKPPEDEAEHYKIPPLGKHYSQRWAQEDLLEEQKDGARAAAVADKKKGLIGPLTELDTKDVDALLKKSEAQHEQPEDGCPFGALTQRLLQALVEENIISPMEDSPIPDMSGKESGADGASTSPRNQNKPFSVPHTKSLESRIKEELIAQGLLESEDRPAEDSEDEVLAELRKRQAELKALSAHNRTKKHDLLRLAKEEVSRQELRQRVRMADNEVMDAFRKIMAARQKKRTPTKKEKDQAWKTLKERESILKLLDG.

Residue Lys21 forms a Glycyl lysine isopeptide (Lys-Gly) (interchain with G-Cter in SUMO2) linkage. Residues 40-69 (IEELDTLQLELETLLSSASRRLRVLEAETQ) adopt a coiled-coil conformation. Residues 87-127 (ARDHELGAPPKHGKPKKQKLEGKTGHGPGPGPGRPKSKNVQ) are disordered. Lys129 participates in a covalent cross-link: Glycyl lysine isopeptide (Lys-Gly) (interchain with G-Cter in SUMO2). Positions 272–319 (NIISPMEDSPIPDMSGKESGADGASTSPRNQNKPFSVPHTKSLESRIK) are disordered. A phosphoserine mark is found at Ser280 and Ser298. A compositionally biased stretch (polar residues) spans 295-305 (ASTSPRNQNKP). Residues 367–407 (LLRLAKEEVSRQELRQRVRMADNEVMDAFRKIMAARQKKRT) are a coiled coil. N6-acetyllysine is present on Lys418.

Belongs to the NGG1 family. In terms of assembly, the PCAF complex is composed of a number of TBP-associated factors (TAFS), such as TAF5, TAF5L, TAF6, TAF6L, TAF9, TAF10 and TAF12, PCAF, and also PCAF-associated factors (PAFs), such as TADA2L/ADA2, TADA3L/ADA3 and SPT3. Interacts directly with TADA2L and PCAF and also with the high-risk HPV oncoprotein E6. Component of the STAGA transcription coactivator-HAT complex, at least composed of SUPT3H, GCN5L2, TAF5L, TAF6L, SUPT7L, TADA3L, TAD1L, TAF10, TAF12, TRRAP and TAF9. Component of the TFTC-HAT complex. Component of the ADA2A-containing complex (ATAC), composed of KAT14, KAT2A, TADA2L, TADA3L, ZZ3, MBIP, WDR5, YEATS2, CCDC101 and DR1.

Its subcellular location is the nucleus. In terms of biological role, functions as a component of the PCAF complex. The PCAF complex is capable of efficiently acetylating histones in a nucleosomal context. The PCAF complex could be considered as the human version of the yeast SAGA complex. Also known as a coactivator for p53/TP53-dependent transcriptional activation. Component of the ATAC complex, a complex with histone acetyltransferase activity on histones H3 and H4. The sequence is that of Transcriptional adapter 3 (Tada3) from Rattus norvegicus (Rat).